We begin with the raw amino-acid sequence, 338 residues long: MSDFDSNPFADPDLNNPFKDPSVTQVTRNVPPGLDEYNPFSDSRTPPPGSVKMPNVPNTQPAIMKPTEEHPAYTQITKEHALAQAELLKRQEELERKAAELDRREREMQNLSQHGRKNNWPPLPSNFPVGPCFYQDFSVDIPVEFQKTVKLMYYLWMFHAVTLFLNIFGCLAWFCVDSSRAVDFGLSILWFLLFTPCSFVCWYRPLYGAFRSDSSFRFFVFFFVYICQFAVHVLQAAGFHNWGNCGWISSLTGLNKNIPVGIMMIIIAALFTASAVISLVMFKKVHGLYRTTGASFEKAQQEFATGVMSNKTVQTAAANAASTAATSAAQNAFKGNQM.

The interval 1–64 (MSDFDSNPFA…NVPNTQPAIM (64 aa)) is disordered. Residue Ser2 is modified to N-acetylserine. Phosphoserine is present on Ser2. The Cytoplasmic portion of the chain corresponds to 2-155 (SDFDSNPFAD…QKTVKLMYYL (154 aa)). The residue at position 45 (Thr45) is a Phosphothreonine. Residues 156 to 176 (WMFHAVTLFLNIFGCLAWFCV) traverse the membrane as a helical segment. Over 177–181 (DSSRA) the chain is Lumenal. Residues 182-202 (VDFGLSILWFLLFTPCSFVCW) form a helical membrane-spanning segment. Residues 203–218 (YRPLYGAFRSDSSFRF) are Cytoplasmic-facing. A helical transmembrane segment spans residues 219–239 (FVFFFVYICQFAVHVLQAAGF). At 240-261 (HNWGNCGWISSLTGLNKNIPVG) the chain is on the lumenal side. The chain crosses the membrane as a helical span at residues 262 to 282 (IMMIIIAALFTASAVISLVMF). Topologically, residues 283–338 (KKVHGLYRTTGASFEKAQQEFATGVMSNKTVQTAAANAASTAATSAAQNAFKGNQM) are cytoplasmic.

It belongs to the SCAMP family. As to quaternary structure, interacts with SYNRG, ITSN1 and SLC9A7.

It localises to the golgi apparatus. Its subcellular location is the trans-Golgi network membrane. It is found in the recycling endosome membrane. Functionally, functions in post-Golgi recycling pathways. Acts as a recycling carrier to the cell surface. The sequence is that of Secretory carrier-associated membrane protein 1 (Scamp1) from Mus musculus (Mouse).